The following is a 176-amino-acid chain: HTH-type transcriptional regulator DctR (176 aa).

The HTH luxR-type domain maps to 109 to 174 (VPEAAVSLSR…ELVRHQHIDY (66 aa)). The H-T-H motif DNA-binding region spans 133-152 (TEDILEKLKISLKTFYCHKH).

Functionally, may act as a transcriptional regulator of dctA. In Escherichia coli (strain K12), this protein is HTH-type transcriptional regulator DctR (dctR).